The primary structure comprises 217 residues: Membrane-associated progesterone receptor component 2 (217 aa).

S15 carries O-linked (Xyl...) (chondroitin sulfate) serine glycosylation. The chain crosses the membrane as a helical span at residues 40-62 (ALLATGGEMLLNVALVALVLLGA). 3 positions are modified to phosphoserine: S84, S98, and S202. A Cytochrome b5 heme-binding domain is found at 96–195 (DFSLEQLRQY…EKYDYVGRLL (100 aa)). Residues 196 to 217 (KPGEEPSEYTDEEDTKDHSKQD) form a disordered region. Over residues 200-209 (EPSEYTDEED) the composition is skewed to acidic residues. The residue at position 204 (Y204) is a Phosphotyrosine. T205 is modified (phosphothreonine).

It belongs to the cytochrome b5 family. MAPR subfamily. Interacts with PGRMC1. Interacts with AAAS. Expressed in brown adipose tissue, white adipose tissue, liver, heart, skeletal muscle, brain and adrenal gland.

Its subcellular location is the membrane. It is found in the nucleus envelope. The protein localises to the endoplasmic reticulum. The protein resides in the secreted. In terms of biological role, required for the maintenance of uterine histoarchitecture and normal female reproductive lifespan. May serve as a universal non-classical progesterone receptor in the uterus. Intracellular heme chaperone required for delivery of labile, or signaling heme, to the nucleus. Plays a role in adipocyte function and systemic glucose homeostasis. In brown fat, which has a high demand for heme, delivery of labile heme in the nucleus regulates the activity of heme-responsive transcriptional repressors such as NR1D1 and BACH1. The chain is Membrane-associated progesterone receptor component 2 from Mus musculus (Mouse).